The sequence spans 225 residues: Ribonuclease 3 (225 aa).

The RNase III domain occupies 5–127 (IEKLTRQLGY…IIGAVYLDSD (123 aa)). Glu40 is a Mg(2+) binding site. Asp44 is a catalytic residue. The Mg(2+) site is built by Asp113 and Glu116. Glu116 is an active-site residue. The DRBM domain occupies 154–224 (DPKTRLQEFL…AELALEQLTN (71 aa)).

This sequence belongs to the ribonuclease III family. Homodimer. The cofactor is Mg(2+).

It localises to the cytoplasm. The enzyme catalyses Endonucleolytic cleavage to 5'-phosphomonoester.. In terms of biological role, digests double-stranded RNA. Involved in the processing of primary rRNA transcript to yield the immediate precursors to the large and small rRNAs (23S and 16S). Processes some mRNAs, and tRNAs when they are encoded in the rRNA operon. Processes pre-crRNA and tracrRNA of type II CRISPR loci if present in the organism. In Vibrio vulnificus (strain YJ016), this protein is Ribonuclease 3.